Reading from the N-terminus, the 161-residue chain is RNA pyrophosphohydrolase (161 aa).

The region spanning Gly-6–Val-149 is the Nudix hydrolase domain. A Nudix box motif is present at residues Gly-38–Gly-59.

Belongs to the Nudix hydrolase family. RppH subfamily. Requires a divalent metal cation as cofactor.

Its function is as follows. Accelerates the degradation of transcripts by removing pyrophosphate from the 5'-end of triphosphorylated RNA, leading to a more labile monophosphorylated state that can stimulate subsequent ribonuclease cleavage. This chain is RNA pyrophosphohydrolase, found in Acinetobacter baumannii (strain AB307-0294).